The chain runs to 334 residues: Dihydroorotate dehydrogenase (quinone) (334 aa).

FMN-binding positions include 61 to 65 and Thr-85; that span reads AGLDK. Lys-65 contributes to the substrate binding site. 110–114 provides a ligand contact to substrate; that stretch reads NRMGF. The FMN site is built by Asn-138 and Asn-171. Asn-171 provides a ligand contact to substrate. Ser-174 (nucleophile) is an active-site residue. Asn-176 is a binding site for substrate. 2 residues coordinate FMN: Lys-216 and Thr-244. Substrate is bound at residue 245–246; it reads NT. FMN contacts are provided by residues Gly-266, Gly-295, and 316–317; that span reads YT.

This sequence belongs to the dihydroorotate dehydrogenase family. Type 2 subfamily. Monomer. It depends on FMN as a cofactor.

The protein localises to the cell membrane. It catalyses the reaction (S)-dihydroorotate + a quinone = orotate + a quinol. The protein operates within pyrimidine metabolism; UMP biosynthesis via de novo pathway; orotate from (S)-dihydroorotate (quinone route): step 1/1. Its function is as follows. Catalyzes the conversion of dihydroorotate to orotate with quinone as electron acceptor. In Idiomarina loihiensis (strain ATCC BAA-735 / DSM 15497 / L2-TR), this protein is Dihydroorotate dehydrogenase (quinone).